Consider the following 110-residue polypeptide: Nucleoid-associated protein Mvan_5528 (110 aa).

The protein belongs to the YbaB/EbfC family. As to quaternary structure, homodimer.

It localises to the cytoplasm. It is found in the nucleoid. Its function is as follows. Binds to DNA and alters its conformation. May be involved in regulation of gene expression, nucleoid organization and DNA protection. This is Nucleoid-associated protein Mvan_5528 from Mycolicibacterium vanbaalenii (strain DSM 7251 / JCM 13017 / BCRC 16820 / KCTC 9966 / NRRL B-24157 / PYR-1) (Mycobacterium vanbaalenii).